The following is a 680-amino-acid chain: DNA-directed RNA polymerase subunit beta' (680 aa).

Positions 69, 71, 87, and 90 each coordinate Zn(2+). Residues Asp-489, Asp-491, and Asp-493 each coordinate Mg(2+).

This sequence belongs to the RNA polymerase beta' chain family. RpoC1 subfamily. In plastids the minimal PEP RNA polymerase catalytic core is composed of four subunits: alpha, beta, beta', and beta''. When a (nuclear-encoded) sigma factor is associated with the core the holoenzyme is formed, which can initiate transcription. Requires Mg(2+) as cofactor. Zn(2+) serves as cofactor.

It localises to the plastid. The protein resides in the chloroplast. The enzyme catalyses RNA(n) + a ribonucleoside 5'-triphosphate = RNA(n+1) + diphosphate. Its function is as follows. DNA-dependent RNA polymerase catalyzes the transcription of DNA into RNA using the four ribonucleoside triphosphates as substrates. This is DNA-directed RNA polymerase subunit beta' from Citrus sinensis (Sweet orange).